We begin with the raw amino-acid sequence, 215 residues long: 3-dehydroquinate dehydratase (215 aa).

Residues S6, 31-33 (ELR), and R64 contribute to the 3-dehydroquinate site. The active-site Proton donor/acceptor is the H111. Catalysis depends on K138, which acts as the Schiff-base intermediate with substrate. Residues R174, T193, and Q197 each contribute to the 3-dehydroquinate site.

Belongs to the type-I 3-dehydroquinase family. In terms of assembly, homodimer.

It catalyses the reaction 3-dehydroquinate = 3-dehydroshikimate + H2O. It functions in the pathway metabolic intermediate biosynthesis; chorismate biosynthesis; chorismate from D-erythrose 4-phosphate and phosphoenolpyruvate: step 3/7. Involved in the third step of the chorismate pathway, which leads to the biosynthesis of aromatic amino acids. Catalyzes the cis-dehydration of 3-dehydroquinate (DHQ) and introduces the first double bond of the aromatic ring to yield 3-dehydroshikimate. In Ignicoccus hospitalis (strain KIN4/I / DSM 18386 / JCM 14125), this protein is 3-dehydroquinate dehydratase.